The chain runs to 246 residues: Probable transcriptional regulatory protein Pden_1905 (246 aa).

Residues 1-21 (MAGHSKWANIQHRKGKQDKLR) form a disordered region.

Belongs to the TACO1 family.

It is found in the cytoplasm. This chain is Probable transcriptional regulatory protein Pden_1905, found in Paracoccus denitrificans (strain Pd 1222).